We begin with the raw amino-acid sequence, 337 residues long: Inositol 2-dehydrogenase (337 aa).

Belongs to the Gfo/Idh/MocA family. As to quaternary structure, homotetramer.

It carries out the reaction myo-inositol + NAD(+) = scyllo-inosose + NADH + H(+). Involved in the oxidation of myo-inositol (MI) to 2-keto-myo-inositol (2KMI or 2-inosose). This chain is Inositol 2-dehydrogenase, found in Burkholderia cenocepacia (strain HI2424).